The following is a 704-amino-acid chain: DNA ligase (704 aa).

NAD(+) contacts are provided by residues 43 to 47 (DADYD), 92 to 93 (SL), and Glu124. Lys126 acts as the N6-AMP-lysine intermediate in catalysis. NAD(+) is bound by residues Arg147, Glu182, Lys298, and Lys322. The Zn(2+) site is built by Cys427, Cys430, Cys445, and Cys451. One can recognise a BRCT domain in the interval 625–704 (PVASPVAGRI…DGWLRLIGDA (80 aa)).

The protein belongs to the NAD-dependent DNA ligase family. LigA subfamily. The cofactor is Mg(2+). Requires Mn(2+) as cofactor.

The enzyme catalyses NAD(+) + (deoxyribonucleotide)n-3'-hydroxyl + 5'-phospho-(deoxyribonucleotide)m = (deoxyribonucleotide)n+m + AMP + beta-nicotinamide D-nucleotide.. Functionally, DNA ligase that catalyzes the formation of phosphodiester linkages between 5'-phosphoryl and 3'-hydroxyl groups in double-stranded DNA using NAD as a coenzyme and as the energy source for the reaction. It is essential for DNA replication and repair of damaged DNA. In Cereibacter sphaeroides (strain KD131 / KCTC 12085) (Rhodobacter sphaeroides), this protein is DNA ligase.